The following is an 844-amino-acid chain: MSKRGMSSRAKGDKAEALAALQAANEDLRAKLTDIQIELQQEKSKVSKVEREKNQELRQVREHEQHKTAVLLTELKTKLHEEKMKELQAVRETLLRQHEAELLRVIKIKDNENQRLQALLSALRDGGPEKVKTVLLSEAKEEAKKGFEVEKVKMQQEISELKGAKRQVEEALTLVIQADKIKAAEIRSVYHLHQEEITRIKKECEREIRRLMEEIKFKDRAVFVLERELGVQAGHAQRLQLQKEALDEQLSQVREADRHPGSPRRELPHAAGAGDASDHSGSPEQQLDEKDARRFQLKIAELSAIIRKLEDRNALLSEERNELLKRVREAESQYKPLLDKNKRLSRKNEDLSHALRRMENKLKFVTQENIEMRQRAGIIRRPSSLNDLDQSQDEREVDFLKLQIVEQQNLIDELSKTLETAGYVKSVLERDKLLRFRKQRKKMAKLPKPVVVETFFGYDEEASLESDGSSVSYQTDRTDQTPCTPDDDLEEGMAKEETELRFRQLTMEYQALQRAYALLQEQVGGTLDAEREVKTREQLQAEVQRAQARIEDLEKALAEQGQDMKWIEEKQALYRRNQELVEKIKQMETEEARLRHEVQDARDQNELLEFRILELEERERKSPAISFHHTPFVDGKSPLQVYCEAEGVTDIVVAELMKKLDILGDNANLTNEEQVVVIQARTVLTLAEKWLQQIEETEAALQRKMVDLESEKELFSKQKGYLDEELDYRKQALDQANKHILELEAMLYDALQQEAGAKVAELLSEEEREKLKVAVEQWKRQVMSELRERDAQILRERMELLQLAQQRIKELEERIEAQKRQIKELEEKFLFLFLFFSLAFILWS.

Positions 8–258 form a coiled coil; it reads SRAKGDKAEA…QLSQVREADR (251 aa). The disordered stretch occupies residues 250–290; it reads LSQVREADRHPGSPRRELPHAAGAGDASDHSGSPEQQLDEK. Residues 254–268 show a composition bias toward basic and acidic residues; it reads READRHPGSPRRELP. Positions 269-282 are enriched in low complexity; the sequence is HAAGAGDASDHSGS. Positions 289-421 form a coiled coil; that stretch reads EKDARRFQLK…DELSKTLETA (133 aa). Residue Ser-384 is modified to Phosphoserine. The segment covering 466 to 483 has biased composition (polar residues); the sequence is SDGSSVSYQTDRTDQTPC. The tract at residues 466–489 is disordered; sequence SDGSSVSYQTDRTDQTPCTPDDDL. Coiled-coil stretches lie at residues 493–621 and 683–834; these read MAKE…RERK and VLTL…FLFL.

The protein belongs to the JAKMIP family. As to expression, specifically expressed in the CNS and endocrine tissues. Also detected in other tissues including heart, testis and prostate.

The protein resides in the golgi apparatus. The protein is Janus kinase and microtubule-interacting protein 3 (JAKMIP3) of Homo sapiens (Human).